We begin with the raw amino-acid sequence, 324 residues long: Lipoyl synthase (324 aa).

7 residues coordinate [4Fe-4S] cluster: Cys-72, Cys-77, Cys-83, Cys-98, Cys-102, Cys-105, and Ser-313. A Radical SAM core domain is found at Phe-84–Leu-302.

It belongs to the radical SAM superfamily. Lipoyl synthase family. It depends on [4Fe-4S] cluster as a cofactor.

It is found in the cytoplasm. The enzyme catalyses [[Fe-S] cluster scaffold protein carrying a second [4Fe-4S](2+) cluster] + N(6)-octanoyl-L-lysyl-[protein] + 2 oxidized [2Fe-2S]-[ferredoxin] + 2 S-adenosyl-L-methionine + 4 H(+) = [[Fe-S] cluster scaffold protein] + N(6)-[(R)-dihydrolipoyl]-L-lysyl-[protein] + 4 Fe(3+) + 2 hydrogen sulfide + 2 5'-deoxyadenosine + 2 L-methionine + 2 reduced [2Fe-2S]-[ferredoxin]. The protein operates within protein modification; protein lipoylation via endogenous pathway; protein N(6)-(lipoyl)lysine from octanoyl-[acyl-carrier-protein]: step 2/2. Catalyzes the radical-mediated insertion of two sulfur atoms into the C-6 and C-8 positions of the octanoyl moiety bound to the lipoyl domains of lipoate-dependent enzymes, thereby converting the octanoylated domains into lipoylated derivatives. The protein is Lipoyl synthase of Dichelobacter nodosus (strain VCS1703A).